A 256-amino-acid chain; its full sequence is Proteasome subunit beta type-5 (256 aa).

Residues 1–55 (CNMALADIVRLPPASEAPFAPLGAPRDLSGPPSKLAVRPWGGADLPGPGLQLLHG) constitute a propeptide, removed in mature form. The Nucleophile role is filled by T56.

This sequence belongs to the peptidase T1B family. As to quaternary structure, the 26S proteasome consists of a 20S proteasome core and two 19S regulatory subunits. The 20S proteasome core is a barrel-shaped complex made of 28 subunits that are arranged in four stacked rings. The two outer rings are each formed by seven alpha subunits, and the two inner rings are formed by seven beta subunits. The proteolytic activity is exerted by three beta-subunits PSMB5, PSMB6 and PSMB7. Directly interacts with POMP. Interacts with ABCB1 and TAP1.

The protein resides in the cytoplasm. It is found in the nucleus. The catalysed reaction is Cleavage of peptide bonds with very broad specificity.. Functionally, component of the 20S core proteasome complex involved in the proteolytic degradation of most intracellular proteins. This complex plays numerous essential roles within the cell by associating with different regulatory particles. Associated with two 19S regulatory particles, forms the 26S proteasome and thus participates in the ATP-dependent degradation of ubiquitinated proteins. The 26S proteasome plays a key role in the maintenance of protein homeostasis by removing misfolded or damaged proteins that could impair cellular functions, and by removing proteins whose functions are no longer required. Associated with the PA200 or PA28, the 20S proteasome mediates ubiquitin-independent protein degradation. This type of proteolysis is required in several pathways including spermatogenesis (20S-PA200 complex) or generation of a subset of MHC class I-presented antigenic peptides (20S-PA28 complex). Within the 20S core complex, PSMB5 displays a chymotrypsin-like activity. This is Proteasome subunit beta type-5 (PSMB5) from Gallus gallus (Chicken).